A 342-amino-acid polypeptide reads, in one-letter code: GTPase Obg (342 aa).

The Obg domain occupies 1–159 (MQFIDQAKIE…KQLRLELKLL (159 aa)). Residues 160–330 (AEVGIIGLPN…MLQEIWGILD (171 aa)) form the OBG-type G domain. GTP is bound by residues 166-173 (GLPNAGKS), 191-195 (FTTLI), 213-216 (DIPG), 280-283 (NKID), and 311-313 (SAV). Mg(2+) is bound by residues S173 and T193.

It belongs to the TRAFAC class OBG-HflX-like GTPase superfamily. OBG GTPase family. Monomer. Requires Mg(2+) as cofactor.

It is found in the cytoplasm. An essential GTPase which binds GTP, GDP and possibly (p)ppGpp with moderate affinity, with high nucleotide exchange rates and a fairly low GTP hydrolysis rate. Plays a role in control of the cell cycle, stress response, ribosome biogenesis and in those bacteria that undergo differentiation, in morphogenesis control. The protein is GTPase Obg of Nostoc punctiforme (strain ATCC 29133 / PCC 73102).